Here is a 444-residue protein sequence, read N- to C-terminus: Aspartate--tRNA(Asp/Asn) ligase (444 aa).

L-aspartate is bound at residue glutamate 176. An aspartate region spans residues 198-201 (QLFK). An L-aspartate-binding site is contributed by arginine 220. Residues 220–222 (RAE), 228–230 (RHL), and glutamate 367 each bind ATP. The Mg(2+) site is built by glutamate 367 and serine 370. Serine 370 and arginine 374 together coordinate L-aspartate. 415–418 (GCER) contributes to the ATP binding site.

The protein belongs to the class-II aminoacyl-tRNA synthetase family. Type 2 subfamily. As to quaternary structure, homodimer. Requires Mg(2+) as cofactor.

The protein localises to the cytoplasm. It carries out the reaction tRNA(Asx) + L-aspartate + ATP = L-aspartyl-tRNA(Asx) + AMP + diphosphate. Its function is as follows. Aspartyl-tRNA synthetase with relaxed tRNA specificity since it is able to aspartylate not only its cognate tRNA(Asp) but also tRNA(Asn). Reaction proceeds in two steps: L-aspartate is first activated by ATP to form Asp-AMP and then transferred to the acceptor end of tRNA(Asp/Asn). The chain is Aspartate--tRNA(Asp/Asn) ligase from Methanosarcina barkeri (strain Fusaro / DSM 804).